We begin with the raw amino-acid sequence, 206 residues long: Glycerol-3-phosphate acyltransferase 1 (206 aa).

A run of 5 helical transmembrane segments spans residues 7-27 (LVIG…KIFL), 54-74 (ILTC…VYFI), 81-101 (DLSF…WNHF), 114-134 (IVFF…FLVI), and 155-175 (WINF…IMIF).

It belongs to the PlsY family. In terms of assembly, probably interacts with PlsX.

The protein resides in the cell membrane. It catalyses the reaction an acyl phosphate + sn-glycerol 3-phosphate = a 1-acyl-sn-glycero-3-phosphate + phosphate. It participates in lipid metabolism; phospholipid metabolism. Its function is as follows. Catalyzes the transfer of an acyl group from acyl-phosphate (acyl-PO(4)) to glycerol-3-phosphate (G3P) to form lysophosphatidic acid (LPA). This enzyme utilizes acyl-phosphate as fatty acyl donor, but not acyl-CoA or acyl-ACP. This Lactobacillus johnsonii (strain CNCM I-12250 / La1 / NCC 533) protein is Glycerol-3-phosphate acyltransferase 1.